The sequence spans 204 residues: UPF0637 protein USA300HOU_1046.1 (204 aa).

This sequence belongs to the UPF0637 family.

The polypeptide is UPF0637 protein USA300HOU_1046.1 (Staphylococcus aureus (strain USA300 / TCH1516)).